The primary structure comprises 458 residues: ATP synthase subunit beta (458 aa).

Position 148 to 155 (148 to 155 (GGAGVGKT)) interacts with ATP.

The protein belongs to the ATPase alpha/beta chains family. In terms of assembly, F-type ATPases have 2 components, CF(1) - the catalytic core - and CF(0) - the membrane proton channel. CF(1) has five subunits: alpha(3), beta(3), gamma(1), delta(1), epsilon(1). CF(0) has three main subunits: a(1), b(2) and c(9-12). The alpha and beta chains form an alternating ring which encloses part of the gamma chain. CF(1) is attached to CF(0) by a central stalk formed by the gamma and epsilon chains, while a peripheral stalk is formed by the delta and b chains.

It is found in the cell inner membrane. It catalyses the reaction ATP + H2O + 4 H(+)(in) = ADP + phosphate + 5 H(+)(out). Functionally, produces ATP from ADP in the presence of a proton gradient across the membrane. The catalytic sites are hosted primarily by the beta subunits. This is ATP synthase subunit beta from Francisella tularensis subsp. holarctica (strain FTNF002-00 / FTA).